A 122-amino-acid polypeptide reads, in one-letter code: UPF0102 protein CPR_1677 (122 aa).

This sequence belongs to the UPF0102 family.

The chain is UPF0102 protein CPR_1677 from Clostridium perfringens (strain SM101 / Type A).